The chain runs to 118 residues: MFKYKQVMIVRSDLKLSKGKLAVQVAHGAVTAAFKAYKEKPEWFKGWFNEGQKKVVVKAESERELFELKAEAEKLGIPNSLIRDAGLTEIPPGTITCLAIGPGPEEIVNKITGNLKLV.

This sequence belongs to the PTH2 family.

Its subcellular location is the cytoplasm. The catalysed reaction is an N-acyl-L-alpha-aminoacyl-tRNA + H2O = an N-acyl-L-amino acid + a tRNA + H(+). In terms of biological role, the natural substrate for this enzyme may be peptidyl-tRNAs which drop off the ribosome during protein synthesis. The chain is Peptidyl-tRNA hydrolase from Thermococcus sibiricus (strain DSM 12597 / MM 739).